A 527-amino-acid chain; its full sequence is Peptide chain release factor 3 (527 aa).

Positions 9 to 277 (AKRRTFAIIS…AVVDWAPKPL (269 aa)) constitute a tr-type G domain. Residues 18–25 (SHPDAGKT), 86–90 (DTPGH), and 140–143 (NKLD) contribute to the GTP site.

The protein belongs to the TRAFAC class translation factor GTPase superfamily. Classic translation factor GTPase family. PrfC subfamily.

Its subcellular location is the cytoplasm. Its function is as follows. Increases the formation of ribosomal termination complexes and stimulates activities of RF-1 and RF-2. It binds guanine nucleotides and has strong preference for UGA stop codons. It may interact directly with the ribosome. The stimulation of RF-1 and RF-2 is significantly reduced by GTP and GDP, but not by GMP. This is Peptide chain release factor 3 from Stutzerimonas stutzeri (strain A1501) (Pseudomonas stutzeri).